We begin with the raw amino-acid sequence, 170 residues long: MELKDYIATIENYPKEGVVFRDISPLMADGNAYNYAATEIVQYARDKEIDMVVGPEARGFIIGCPVAFALGVGFAPVRKPGKLPREVIEATYEKEYGTDTLTMHSDSIKPGQRVLIVDDLLATGGTIAATIELVEKMGGIVVGCAFLIELDELKGREKIGDYDYKVLMHY.

It belongs to the purine/pyrimidine phosphoribosyltransferase family. In terms of assembly, homodimer.

It is found in the cytoplasm. The enzyme catalyses AMP + diphosphate = 5-phospho-alpha-D-ribose 1-diphosphate + adenine. Its pathway is purine metabolism; AMP biosynthesis via salvage pathway; AMP from adenine: step 1/1. Functionally, catalyzes a salvage reaction resulting in the formation of AMP, that is energically less costly than de novo synthesis. This chain is Adenine phosphoribosyltransferase, found in Lactococcus lactis subsp. lactis (strain IL1403) (Streptococcus lactis).